The following is a 376-amino-acid chain: Chaperone protein DnaJ (376 aa).

Positions 5-70 (DYYEVLGVAR…QKRAAYDQFG (66 aa)) constitute a J domain. A CR-type zinc finger spans residues 134 to 212 (GTSVKIKVPT…CHGHGRVEET (79 aa)). Zn(2+) contacts are provided by Cys147, Cys150, Cys164, Cys167, Cys186, Cys189, Cys200, and Cys203. CXXCXGXG motif repeat units follow at residues 147–154 (CTNCGGSG), 164–171 (CNTCGGHG), 186–193 (CPTCRGQG), and 200–207 (CNKCHGHG).

Belongs to the DnaJ family. As to quaternary structure, homodimer. The cofactor is Zn(2+).

It localises to the cytoplasm. Participates actively in the response to hyperosmotic and heat shock by preventing the aggregation of stress-denatured proteins and by disaggregating proteins, also in an autonomous, DnaK-independent fashion. Unfolded proteins bind initially to DnaJ; upon interaction with the DnaJ-bound protein, DnaK hydrolyzes its bound ATP, resulting in the formation of a stable complex. GrpE releases ADP from DnaK; ATP binding to DnaK triggers the release of the substrate protein, thus completing the reaction cycle. Several rounds of ATP-dependent interactions between DnaJ, DnaK and GrpE are required for fully efficient folding. Also involved, together with DnaK and GrpE, in the DNA replication of plasmids through activation of initiation proteins. This chain is Chaperone protein DnaJ, found in Teredinibacter turnerae (strain ATCC 39867 / T7901).